A 439-amino-acid chain; its full sequence is uncharacterized protein (439 aa).

One can recognise a DAGKc domain in the interval 65–208; the sequence is TRPKRVFVLV…VYAFELTTEG (144 aa).

This is an uncharacterized protein from Caenorhabditis elegans.